The following is a 383-amino-acid chain: tRNA-specific 2-thiouridylase MnmA (383 aa).

ATP contacts are provided by residues 9–16 (GMSGGVDS) and methionine 35. An interaction with target base in tRNA region spans residues 95-97 (NPD). Residue cysteine 100 is the Nucleophile of the active site. A disulfide bridge connects residues cysteine 100 and cysteine 196. Residue glycine 124 participates in ATP binding. The segment at 146–148 (KDQ) is interaction with tRNA. Residue cysteine 196 is the Cysteine persulfide intermediate of the active site. Residues 308–309 (RY) are interaction with tRNA.

The protein belongs to the MnmA/TRMU family.

It is found in the cytoplasm. The enzyme catalyses S-sulfanyl-L-cysteinyl-[protein] + uridine(34) in tRNA + AH2 + ATP = 2-thiouridine(34) in tRNA + L-cysteinyl-[protein] + A + AMP + diphosphate + H(+). Functionally, catalyzes the 2-thiolation of uridine at the wobble position (U34) of tRNA, leading to the formation of s(2)U34. The chain is tRNA-specific 2-thiouridylase MnmA from Burkholderia mallei (strain NCTC 10247).